A 370-amino-acid polypeptide reads, in one-letter code: GTPase Obg (370 aa).

Residues 1–159 (MKFIDEARIE…RMLRLELKVL (159 aa)) enclose the Obg domain. Positions 127–146 (NLHFKSSTNRAPRQKTDGKP) are disordered. The OBG-type G domain occupies 160-334 (ADVGLLGMPN…LCYAIYDYLA (175 aa)). GTP is bound by residues 166-173 (GMPNAGKS), 191-195 (FTTLA), 213-216 (DIPG), 284-287 (NKLD), and 315-317 (SAL). Mg(2+) contacts are provided by S173 and T193. A disordered region spans residues 350–370 (ADVRFRDAPPSDGGATSGGDA).

This sequence belongs to the TRAFAC class OBG-HflX-like GTPase superfamily. OBG GTPase family. Monomer. Mg(2+) serves as cofactor.

It is found in the cytoplasm. An essential GTPase which binds GTP, GDP and possibly (p)ppGpp with moderate affinity, with high nucleotide exchange rates and a fairly low GTP hydrolysis rate. Plays a role in control of the cell cycle, stress response, ribosome biogenesis and in those bacteria that undergo differentiation, in morphogenesis control. The polypeptide is GTPase Obg (Burkholderia vietnamiensis (strain G4 / LMG 22486) (Burkholderia cepacia (strain R1808))).